Here is a 452-residue protein sequence, read N- to C-terminus: Tubulin alpha-1 chain (452 aa).

Glutamine 11 contacts GTP. Lysine 40 is subject to N6-acetyllysine. GTP-binding residues include glutamate 71, serine 140, glycine 144, threonine 145, threonine 179, asparagine 206, and asparagine 228. Mg(2+) is bound at residue glutamate 71. Residue glutamate 254 is part of the active site. A disordered region spans residues 433 to 452 (EEVGVDSADAEGEEEEGDEY).

Belongs to the tubulin family. In terms of assembly, dimer of alpha and beta chains. A typical microtubule is a hollow water-filled tube with an outer diameter of 25 nm and an inner diameter of 15 nM. Alpha-beta heterodimers associate head-to-tail to form protofilaments running lengthwise along the microtubule wall with the beta-tubulin subunit facing the microtubule plus end conferring a structural polarity. Microtubules usually have 13 protofilaments but different protofilament numbers can be found in some organisms and specialized cells. Mg(2+) serves as cofactor. Post-translationally, undergoes a tyrosination/detyrosination cycle, the cyclic removal and re-addition of a C-terminal tyrosine residue by the enzymes tubulin tyrosine carboxypeptidase (TTCP) and tubulin tyrosine ligase (TTL), respectively. In terms of processing, acetylation of alpha chains at Lys-40 stabilizes microtubules and affects affinity and processivity of microtubule motors. This modification has a role in multiple cellular functions, ranging from cell motility, cell cycle progression or cell differentiation to intracellular trafficking and signaling.

The protein localises to the cytoplasm. Its subcellular location is the cytoskeleton. The enzyme catalyses GTP + H2O = GDP + phosphate + H(+). In terms of biological role, tubulin is the major constituent of microtubules, a cylinder consisting of laterally associated linear protofilaments composed of alpha- and beta-tubulin heterodimers. Microtubules grow by the addition of GTP-tubulin dimers to the microtubule end, where a stabilizing cap forms. Below the cap, tubulin dimers are in GDP-bound state, owing to GTPase activity of alpha-tubulin. This is Tubulin alpha-1 chain from Paracentrotus lividus (Common sea urchin).